The sequence spans 29 residues: Trypsin inhibitor 3 (29 aa).

Intrachain disulfides connect Cys-3-Cys-20, Cys-10-Cys-22, and Cys-16-Cys-28.

Belongs to the protease inhibitor I7 (squash-type serine protease inhibitor) family.

Its subcellular location is the secreted. In terms of biological role, inhibits trypsin. The sequence is that of Trypsin inhibitor 3 from Luffa aegyptiaca (Sponge gourd).